Here is a 711-residue protein sequence, read N- to C-terminus: BCLAF1 and THRAP3 family member 3 (711 aa).

Over residues Met-1–Ser-15 the composition is skewed to basic residues. Disordered regions lie at residues Met-1–Asp-42 and Ala-48–Gly-67. A phosphoserine mark is found at Ser-15 and Ser-17. The span at Ala-48–Gly-57 shows a compositional bias: basic and acidic residues. Phosphoserine is present on residues Ser-78, Ser-80, and Ser-187. 2 disordered regions span residues Lys-94–Ile-350 and Glu-371–Ile-404. 6 stretches are compositionally biased toward basic and acidic residues: residues Phe-163–Thr-197, Arg-204–Lys-213, Arg-220–His-242, Ser-296–Tyr-311, Leu-318–Ser-349, and Glu-371–Ser-383. Lys-400 is covalently cross-linked (Glycyl lysine isopeptide (Lys-Gly) (interchain with G-Cter in SUMO2)). Phosphoserine is present on residues Ser-402 and Ser-578.

Belongs to the BCLAF1/THRAP3 family.

It is found in the mitochondrion. The chain is BCLAF1 and THRAP3 family member 3 from Homo sapiens (Human).